Here is a 239-residue protein sequence, read N- to C-terminus: Probable transcriptional regulatory protein Tcr_1104 (239 aa).

The protein belongs to the TACO1 family.

Its subcellular location is the cytoplasm. In Hydrogenovibrio crunogenus (strain DSM 25203 / XCL-2) (Thiomicrospira crunogena), this protein is Probable transcriptional regulatory protein Tcr_1104.